The following is a 635-amino-acid chain: Early transcription factor 70 kDa subunit (635 aa).

Residues 32–185 (RSIIDENKSV…SNIISLMSDE (154 aa)) enclose the Helicase ATP-binding domain. ATP is bound at residue 45–52 (HIMGSGKT). Residues 135-138 (DEAH) carry the DEXH box motif. Residues 326–505 (KFKYFIGKIT…TLPFDIKKLL (180 aa)) enclose the Helicase C-terminal domain.

This sequence belongs to the helicase family. VETF subfamily. In terms of assembly, heterodimer of a 70 kDa and a 82 kDa subunit.

The protein localises to the virion. In terms of biological role, acts with RNA polymerase to initiate transcription from early gene promoters. A DNA-dependent ATPase activity is associated with VETF. This is Early transcription factor 70 kDa subunit (VETFS) from Erythrocebus patas (Red guenon).